The primary structure comprises 468 residues: QFPTDYDEGQDDRPKVGLGARGHRPYDKKKEEAPSLRPVPPPISGGGYRARPATATVGQKKVERKPPDADGCLHADPDLGVLCPTGCKLQDTLVRQERPIRKSIEDLRNTVDSVSRTSSSTFQYITLLKNMWKGRQNQVQDNENVVNEYSSHLEKHQLYIDETVKNNIPTKLRVLRSILENLRSKIQKLESDVSTQMEYCRTPCTVTCNIPVVSGKECEKIIRNEGETSEMYLIQPEDSSKPYRVYCDMKTEKGGWTVIQNRQDGSVDFGRKWDPYKQGFGNIATNAEGKKYCGVPGEYWLGNDRISQLTNMGPTKLLIEMEDWKGDKVTALYEGFTVQNEANKYQLSVSKYKGTAGNALIEGASQLVGENRTMTIHNSMFFSTYDRDNDGWKTTDPRKQCSKEDGGGWWYNRCHAANPNGRYYWGGAYTWDMAKHGTDDGVVWMNWQGSWYSMKKMSMKIRPYFPEQ.

Gln1 is modified (pyrrolidone carboxylic acid). Over residues 1 to 10 (QFPTDYDEGQ) the composition is skewed to acidic residues. The interval 1 to 54 (QFPTDYDEGQDDRPKVGLGARGHRPYDKKKEEAPSLRPVPPPISGGGYRARPAT) is disordered. Thr4 carries an O-linked (GalNAc...) threonine glycan. Tyr6 bears the Sulfotyrosine mark. Over residues 24–34 (RPYDKKKEEAP) the composition is skewed to basic and acidic residues. The stretch at 88-204 (KLQDTLVRQE…TQMEYCRTPC (117 aa)) forms a coiled coil. Intrachain disulfides connect Cys208–Cys293 and Cys218–Cys247. The 257-residue stretch at 209-465 (NIPVVSGKEC…KMSMKIRPYF (257 aa)) folds into the Fibrinogen C-terminal domain. Asn371 is a glycosylation site (N-linked (GlcNAc...) asparagine). An intrachain disulfide couples Cys401 to Cys414.

In terms of assembly, heterohexamer; disulfide linked. Contains 2 sets of 3 non-identical chains (alpha, beta and gamma). The 2 heterotrimers are in head to head conformation with the N-termini in a small central domain. In terms of processing, conversion of fibrinogen to fibrin is triggered by thrombin, which cleaves fibrinopeptides A and B from alpha and beta chains, and thus exposes the N-terminal polymerization sites responsible for the formation of the soft clot. The soft clot is converted into the hard clot by factor XIIIA which catalyzes the epsilon-(gamma-glutamyl)lysine cross-linking between gamma chains (stronger) and between alpha chains (weaker) of different monomers. In terms of tissue distribution, detected in blood plasma (at protein level).

It localises to the secreted. Cleaved by the protease thrombin to yield monomers which, together with fibrinogen alpha (FGA) and fibrinogen gamma (FGG), polymerize to form an insoluble fibrin matrix. Fibrin has a major function in hemostasis as one of the primary components of blood clots. In addition, functions during the early stages of wound repair to stabilize the lesion and guide cell migration during re-epithelialization. Was originally thought to be essential for platelet aggregation, based on in vitro studies using anticoagulated blood. However subsequent studies have shown that it is not absolutely required for thrombus formation in vivo. Enhances expression of SELP in activated platelets. Maternal fibrinogen is essential for successful pregnancy. Fibrin deposition is also associated with infection, where it protects against IFNG-mediated hemorrhage. May also facilitate the antibacterial immune response via both innate and T-cell mediated pathways. In Bos taurus (Bovine), this protein is Fibrinogen beta chain (FGB).